A 276-amino-acid chain; its full sequence is O-methyltransferase cnsE (276 aa).

S-adenosyl-L-methionine is bound by residues glutamine 110, 133 to 134, and histidine 155; that span reads DA.

The protein belongs to the methyltransferase superfamily. The cofactor is S-adenosyl-L-methionine.

The protein operates within alkaloid biosynthesis. O-methyltransferase; part of the gene cluster that mediates the biosynthesis of communesins, a prominent class of indole alkaloids with great potential as pharmaceuticals. Communesins are biosynthesized by the coupling of tryptamine and aurantioclavine, two building blocks derived from L-tryptophan. The L-tryptophan decarboxylase cnsB converts L-tryptophan to tryptamine, whereas the tryptophan dimethylallyltransferase cnsF converts L-tryptophan to 4-dimethylallyl tryptophan which is further transformed to aurantioclavine by the aurantioclavine synthase cnsA, probably aided by the catalase cnsD. The cytochrome P450 monooxygenase cnsC catalyzes the heterodimeric coupling between the two different indole moieties, tryptamine and aurantioclavine, to construct vicinal quaternary stereocenters and yield the heptacyclic communesin scaffold. The O-methyltransferase cnsE then methylates the communesin scaffold to produce communesin K, the simplest characterized communesin that contains the heptacyclic core. The dioxygenase cnsJ converts communesin K into communesin I. Acylation to introduce the hexadienyl group at position N16 of communesin I by the acyltransferase cnsK leads to the production of communesin B. The hexadienyl group is produced by the highly reducing polyketide synthase cnsI, before being hydrolytically removed from cnsI by the serine hydrolase cnsH, converted into hexadienyl-CoA by the CoA ligase cnsG, and then transferred to communesin I by cnsK. Surprisingly, cnsK may also be a promiscuous acyltransferase that can tolerate a range of acyl groups, including acetyl-, propionyl-, and butyryl-CoA, which lead to communesins A, G and H respectively. The roles of the alpha-ketoglutarate-dependent dioxygenases cnsM and cnsP have still to be determined. This chain is O-methyltransferase cnsE, found in Penicillium expansum (Blue mold rot fungus).